The chain runs to 394 residues: 3-phenylpropionate/cinnamic acid dioxygenase ferredoxin--NAD(+) reductase component (394 aa).

5–36 (TFIIVGAGQAGAMAAATLRQQQFDGDIILIGK) contributes to the FAD binding site. 146–174 (RILIVGGGVIGLELAATSCELGANVTVIE) contributes to the NAD(+) binding site.

It belongs to the bacterial ring-hydroxylating dioxygenase ferredoxin reductase family. This dioxygenase system consists of four proteins: the two subunits of the hydroxylase component (HcaE and HcaF), a ferredoxin (HcaC) and a ferredoxin reductase (HcaD). FAD is required as a cofactor.

The catalysed reaction is 2 reduced [2Fe-2S]-[ferredoxin] + NAD(+) + H(+) = 2 oxidized [2Fe-2S]-[ferredoxin] + NADH. It functions in the pathway aromatic compound metabolism; 3-phenylpropanoate degradation. Part of the multicomponent 3-phenylpropionate dioxygenase, that converts 3-phenylpropionic acid (PP) and cinnamic acid (CI) into 3-phenylpropionate-dihydrodiol (PP-dihydrodiol) and cinnamic acid-dihydrodiol (CI-dihydrodiol), respectively. The protein is 3-phenylpropionate/cinnamic acid dioxygenase ferredoxin--NAD(+) reductase component of Photorhabdus laumondii subsp. laumondii (strain DSM 15139 / CIP 105565 / TT01) (Photorhabdus luminescens subsp. laumondii).